The sequence spans 163 residues: MDPNKVEISRLEALPQDLLREIVAKIGVKSAEDYHNCILSCKELGASANDERVLKTLNLALLVKKPLSCRKHLLIMKKCLANNNPDAHYIKGIIWYFNLDHCDVDLHHIGIAANGGQKEAIYMYAMLLLCRGRTEEGKTYMSQLEWAKTPPWLKRVGNKSKLH.

The F-box domain occupies 8–57 (ISRLEALPQDLLREIVAKIGVKSAEDYHNCILSCKELGASANDERVLKTL).

This chain is F-box protein At2g35280, found in Arabidopsis thaliana (Mouse-ear cress).